A 155-amino-acid chain; its full sequence is 6,7-dimethyl-8-ribityllumazine synthase (155 aa).

5-amino-6-(D-ribitylamino)uracil-binding positions include tryptophan 22, 56-58 (SFE), and 80-82 (AVI). 85–86 (AT) serves as a coordination point for (2S)-2-hydroxy-3-oxobutyl phosphate. Residue histidine 88 is the Proton donor of the active site. Position 113 (phenylalanine 113) interacts with 5-amino-6-(D-ribitylamino)uracil. A (2S)-2-hydroxy-3-oxobutyl phosphate-binding site is contributed by arginine 127.

This sequence belongs to the DMRL synthase family.

The enzyme catalyses (2S)-2-hydroxy-3-oxobutyl phosphate + 5-amino-6-(D-ribitylamino)uracil = 6,7-dimethyl-8-(1-D-ribityl)lumazine + phosphate + 2 H2O + H(+). It functions in the pathway cofactor biosynthesis; riboflavin biosynthesis; riboflavin from 2-hydroxy-3-oxobutyl phosphate and 5-amino-6-(D-ribitylamino)uracil: step 1/2. Functionally, catalyzes the formation of 6,7-dimethyl-8-ribityllumazine by condensation of 5-amino-6-(D-ribitylamino)uracil with 3,4-dihydroxy-2-butanone 4-phosphate. This is the penultimate step in the biosynthesis of riboflavin. This chain is 6,7-dimethyl-8-ribityllumazine synthase, found in Chloroflexus aurantiacus (strain ATCC 29364 / DSM 637 / Y-400-fl).